We begin with the raw amino-acid sequence, 287 residues long: Shikimate dehydrogenase (NADP(+)) (287 aa).

Residues 18 to 20 (SYS) and threonine 66 each bind shikimate. Lysine 70 acts as the Proton acceptor in catalysis. Glutamate 82 serves as a coordination point for NADP(+). Residues asparagine 91 and aspartate 106 each contribute to the shikimate site. Residues 130 to 134 (GSGGA) and methionine 228 each bind NADP(+). Tyrosine 230 serves as a coordination point for shikimate. Position 251 (glycine 251) interacts with NADP(+).

This sequence belongs to the shikimate dehydrogenase family. In terms of assembly, homodimer.

The catalysed reaction is shikimate + NADP(+) = 3-dehydroshikimate + NADPH + H(+). Its pathway is metabolic intermediate biosynthesis; chorismate biosynthesis; chorismate from D-erythrose 4-phosphate and phosphoenolpyruvate: step 4/7. Functionally, involved in the biosynthesis of the chorismate, which leads to the biosynthesis of aromatic amino acids. Catalyzes the reversible NADPH linked reduction of 3-dehydroshikimate (DHSA) to yield shikimate (SA). The polypeptide is Shikimate dehydrogenase (NADP(+)) (Chlorobium chlorochromatii (strain CaD3)).